We begin with the raw amino-acid sequence, 249 residues long: tRNA uridine(34) hydroxylase (249 aa).

One can recognise a Rhodanese domain in the interval 124–218 (TKQDVIVIDT…YLEDTQNKNN (95 aa)). The active-site Cysteine persulfide intermediate is the Cys178.

It belongs to the TrhO family.

It catalyses the reaction uridine(34) in tRNA + AH2 + O2 = 5-hydroxyuridine(34) in tRNA + A + H2O. In terms of biological role, catalyzes oxygen-dependent 5-hydroxyuridine (ho5U) modification at position 34 in tRNAs. This chain is tRNA uridine(34) hydroxylase, found in Rickettsia canadensis (strain McKiel).